Here is an 838-residue protein sequence, read N- to C-terminus: MAKPLTDSERQKQISVRGIAGLGDVAEVRKSFNRHLHFTLVKDRNVATPRDYFFALAHTVRDHLVGRWIRTQQHYYERDPKRIYYLSLEFYMGRTLQNTMVNLGLQTACDEATYQLGLDLEELEEIEEDAGLGNGGLGRLAACFLDSMATLGLAAYGYGIRYEFGIFNQKIVNGWQVEEADDWLRYGNPWEKARPEYMLPVHFYGRVEHTPNGVLWLDTQVVLAMPYDTPVPGYKNNTVNTMRLWSAKAPNDFKLKDFNVGDYIEAVLDRNLAENISRVLYPNDNFFEGKELRLKQEYFVVAATLQDIIRRFKSSKFGCRDPVRTCFETFPDKVAIQLNDTHPALSIPELMRILVDVEKVDWDKAWEITKKTCAYTNHTVLPEALERWPVSMFEKLLPRHLEIIYAINQRHLDHVAALFPGDVDRLRRMSVIEEGDCKRINMAHLCVIGSHAVNGVARIHSEIVKQSVFKDFYELEPEKFQNKTNGITPRRWLLLCNPGLAEIIVERIGEGFLTDLSQLKKLLSLVDDEAFIRDVAKVKQENKLKFSAQLEKEYKVKINPCSMFDVHVKRIHEYKRQLLNCLHIITLYNRIKKDPTKTFVPRTVMIGGKAAPGYHMAKMIIKLVTSIGDVVNHDPVVGDRLRVIFLENYRVSLAEKVIPAADLSQQISTAGTEASGTGNMKFMLNGALTIGTMDGANVEMAEEAGEENLFIFGMRVEDVEALDQKGYNAQEFYERLPELRQAVDQISSGFFSPKDPDCFKDVVNMLMYHDRFKVFADYEAYIQCQAQVDHLYRNPKDWTKKVIRNIACSGKFSSDRTITEYAREIWGVEPSDLQIPPP.

A2 carries the N-acetylalanine modification. The residue at position 15 (S15) is a Phosphoserine. Residues D43, Y197, and R310 each coordinate AMP. At Y197 the chain carries Phosphotyrosine. Phosphotyrosine is present on Y473. Residue S524 is modified to Phosphoserine. Pyridoxal 5'-phosphate is bound at residue K569. The segment at 677 to 678 is pyridoxal 5'-phosphate; the sequence is TG. K681 carries the post-translational modification N6-(pyridoxal phosphate)lysine.

Belongs to the glycogen phosphorylase family. As to quaternary structure, homodimer. Dimers associate into a tetramer to form the enzymatically active phosphorylase A. It depends on pyridoxal 5'-phosphate as a cofactor. Phosphorylation of Ser-15 converts phosphorylase B (unphosphorylated) to phosphorylase A.

The catalysed reaction is [(1-&gt;4)-alpha-D-glucosyl](n) + phosphate = [(1-&gt;4)-alpha-D-glucosyl](n-1) + alpha-D-glucose 1-phosphate. Activity of phosphorylase is controlled both by allosteric means (through the non-covalent binding of metabolites) and by covalent modification. Thus AMP allosterically activates, whereas ATP, ADP, and glucose-6-phosphate allosterically inhibit, phosphorylase B. In terms of biological role, glycogen phosphorylase that regulates glycogen mobilization. Phosphorylase is an important allosteric enzyme in carbohydrate metabolism. Enzymes from different sources differ in their regulatory mechanisms and in their natural substrates. However, all known phosphorylases share catalytic and structural properties. This Rattus norvegicus (Rat) protein is Glycogen phosphorylase, brain form (Pygb).